We begin with the raw amino-acid sequence, 370 residues long: 2-oxoisovalerate dehydrogenase subunit beta, mitochondrial (370 aa).

The N-terminal 25 residues, 1–25 (MLRGNNIKKVNSLLVRSFHSTVGNR), are a transit peptide targeting the mitochondrion. Residue Tyr130 participates in thiamine diphosphate binding. Positions 156, 158, 159, and 209 each coordinate K(+).

In terms of assembly, heterotetramer of 2 alpha and 2 beta chains. Thiamine diphosphate serves as cofactor.

It localises to the mitochondrion matrix. It catalyses the reaction N(6)-[(R)-lipoyl]-L-lysyl-[protein] + 3-methyl-2-oxobutanoate + H(+) = N(6)-[(R)-S(8)-2-methylpropanoyldihydrolipoyl]-L-lysyl-[protein] + CO2. Its function is as follows. The branched-chain alpha-keto dehydrogenase complex catalyzes the overall conversion of alpha-keto acids to acyl-CoA and CO(2). It contains multiple copies of three enzymatic components: branched-chain alpha-keto acid decarboxylase (E1), lipoamide acyltransferase (E2) and lipoamide dehydrogenase (E3). This Dictyostelium discoideum (Social amoeba) protein is 2-oxoisovalerate dehydrogenase subunit beta, mitochondrial (bkdB).